We begin with the raw amino-acid sequence, 265 residues long: Tryptophan synthase alpha chain (265 aa).

Catalysis depends on proton acceptor residues Glu48 and Asp59.

The protein belongs to the TrpA family. In terms of assembly, tetramer of two alpha and two beta chains.

It catalyses the reaction (1S,2R)-1-C-(indol-3-yl)glycerol 3-phosphate + L-serine = D-glyceraldehyde 3-phosphate + L-tryptophan + H2O. It functions in the pathway amino-acid biosynthesis; L-tryptophan biosynthesis; L-tryptophan from chorismate: step 5/5. Its function is as follows. The alpha subunit is responsible for the aldol cleavage of indoleglycerol phosphate to indole and glyceraldehyde 3-phosphate. This chain is Tryptophan synthase alpha chain, found in Pelagibacter ubique (strain HTCC1062).